The chain runs to 226 residues: ATP-dependent dethiobiotin synthetase BioD (226 aa).

Position 12–17 (12–17 (GVGKTV)) interacts with ATP. Position 16 (Thr16) interacts with Mg(2+). The active site involves Lys37. Thr41 lines the substrate pocket. Residues Asp49, 108–111 (EGAG), 169–170 (GS), and 197–199 (PAG) each bind ATP. Asp49 and Glu108 together coordinate Mg(2+).

The protein belongs to the dethiobiotin synthetase family. As to quaternary structure, homodimer. Mg(2+) is required as a cofactor.

It localises to the cytoplasm. The catalysed reaction is (7R,8S)-7,8-diammoniononanoate + CO2 + ATP = (4R,5S)-dethiobiotin + ADP + phosphate + 3 H(+). Its pathway is cofactor biosynthesis; biotin biosynthesis; biotin from 7,8-diaminononanoate: step 1/2. Functionally, catalyzes a mechanistically unusual reaction, the ATP-dependent insertion of CO2 between the N7 and N8 nitrogen atoms of 7,8-diaminopelargonic acid (DAPA, also called 7,8-diammoniononanoate) to form a ureido ring. The polypeptide is ATP-dependent dethiobiotin synthetase BioD (Mycobacterium bovis (strain BCG / Pasteur 1173P2)).